The primary structure comprises 694 residues: NADPH--cytochrome P450 reductase (694 aa).

Residues 1-8 are Lumenal-facing; it reads MAQLDTLD. A helical membrane pass occupies residues 9–31; sequence LVVLAVLLVGSVAYFTKGTYWAV. Residues 32-694 lie on the Cytoplasmic side of the membrane; sequence AKDPYASTGP…RGRYQEDVWS (663 aa). The region spanning 66–220 is the Flavodoxin-like domain; sequence CVIFYGSQTG…DFLAWKEPMW (155 aa). Residues 72–77, 123–126, 168–177, and aspartate 203 contribute to the FMN site; these read SQTGTA, ATYG, and LGNNTYEHYN. The FAD-binding FR-type domain occupies 276–537; sequence HNPFIAPIAE…HVRHSNFKLP (262 aa). Arginine 295 lines the NADP(+) pocket. Residues 450 to 453, 468 to 470, and 485 to 488 each bind FAD; these read RYYS, TAV, and GVTT. Residues threonine 551, 613–614, 619–623, and glutamate 655 contribute to the NADP(+) site; these read SR and KVYVQ. Tryptophan 693 is an FAD binding site.

It belongs to the NADPH--cytochrome P450 reductase family. This sequence in the N-terminal section; belongs to the flavodoxin family. The protein in the C-terminal section; belongs to the flavoprotein pyridine nucleotide cytochrome reductase family. Requires FAD as cofactor. FMN is required as a cofactor.

The protein localises to the endoplasmic reticulum membrane. It localises to the mitochondrion outer membrane. The protein resides in the cell membrane. The catalysed reaction is 2 oxidized [cytochrome P450] + NADPH = 2 reduced [cytochrome P450] + NADP(+) + H(+). Its function is as follows. This enzyme is required for electron transfer from NADP to cytochrome P450 in microsomes. It can also provide electron transfer to heme oxygenase and cytochrome B5. Involved in ergosterol biosynthesis. This chain is NADPH--cytochrome P450 reductase, found in Aspergillus niger.